The sequence spans 397 residues: 3-ketoacyl-CoA thiolase, mitochondrial (397 aa).

A mitochondrion; not cleaved-targeting transit peptide spans 1–16 (MALLRGVFVVAAKRTP). Residue Lys-25 is modified to N6-acetyllysine; alternate. Lys-25 is subject to N6-succinyllysine; alternate. Lys-45 bears the N6-succinyllysine mark. Cys-92 acts as the Acyl-thioester intermediate in catalysis. A Phosphothreonine modification is found at Thr-119. Phosphoserine is present on Ser-121. Position 127 is a phosphotyrosine (Tyr-127). Position 136 is a phosphothreonine (Thr-136). Lys-137 carries the post-translational modification N6-acetyllysine; alternate. N6-succinyllysine; alternate is present on Lys-137. Ser-140 is subject to Phosphoserine. N6-acetyllysine; alternate occurs at positions 143, 171, 191, and 209. Lys-143, Lys-171, Lys-191, and Lys-209 each carry N6-succinyllysine; alternate. N6-succinyllysine is present on residues Lys-211, Lys-212, and Lys-214. Residues Arg-224 and Thr-227 each coordinate CoA. Lys-234 carries the post-translational modification N6-acetyllysine; alternate. At Lys-234 the chain carries N6-succinyllysine; alternate. Lys-240 bears the N6-succinyllysine mark. N6-acetyllysine is present on Lys-241. Ser-251 serves as a coordination point for CoA. Residues Lys-269 and Lys-270 each carry the N6-acetyllysine modification. The residue at position 305 (Lys-305) is an N6-acetyllysine; alternate. The residue at position 305 (Lys-305) is an N6-succinyllysine; alternate. Residue Ser-310 is modified to Phosphoserine. Lys-312 carries the N6-acetyllysine; alternate modification. Lys-312 is modified (N6-succinyllysine; alternate). A Phosphoserine modification is found at Ser-333. 2 positions are modified to N6-acetyllysine: Lys-340 and Lys-375. The active-site Proton donor/acceptor is the Cys-382.

It belongs to the thiolase-like superfamily. Thiolase family. In terms of assembly, homotetramer. Interacts with BNIP3.

It is found in the mitochondrion. The enzyme catalyses an acyl-CoA + acetyl-CoA = a 3-oxoacyl-CoA + CoA. The catalysed reaction is 2 acetyl-CoA = acetoacetyl-CoA + CoA. It carries out the reaction acetyl-CoA + H2O = acetate + CoA + H(+). It catalyses the reaction propanoyl-CoA + H2O = propanoate + CoA + H(+). The enzyme catalyses butanoyl-CoA + H2O = butanoate + CoA + H(+). The catalysed reaction is hexanoyl-CoA + H2O = hexanoate + CoA + H(+). It carries out the reaction octanoyl-CoA + H2O = octanoate + CoA + H(+). It catalyses the reaction decanoyl-CoA + H2O = decanoate + CoA + H(+). The enzyme catalyses dodecanoyl-CoA + H2O = dodecanoate + CoA + H(+). The catalysed reaction is tetradecanoyl-CoA + H2O = tetradecanoate + CoA + H(+). It carries out the reaction hexadecanoyl-CoA + H2O = hexadecanoate + CoA + H(+). Its pathway is lipid metabolism; fatty acid beta-oxidation. Functionally, in the production of energy from fats, this is one of the enzymes that catalyzes the last step of the mitochondrial beta-oxidation pathway, an aerobic process breaking down fatty acids into acetyl-CoA. Using free coenzyme A/CoA, catalyzes the thiolytic cleavage of medium- to long-chain unbranched 3-oxoacyl-CoAs into acetyl-CoA and a fatty acyl-CoA shortened by two carbon atoms. Also catalyzes the condensation of two acetyl-CoA molecules into acetoacetyl-CoA and could be involved in the production of ketone bodies. Also displays hydrolase activity on various fatty acyl-CoAs. Thereby, could be responsible for the production of acetate in a side reaction to beta-oxidation. Abolishes BNIP3-mediated apoptosis and mitochondrial damage. This chain is 3-ketoacyl-CoA thiolase, mitochondrial (ACAA2), found in Pongo abelii (Sumatran orangutan).